The following is a 211-amino-acid chain: MKFLSARDFQPVAFLGLMLLTATAFPTSQVRRGDFTEDTTHNRPVYTTSQVGGLITYVLREILEMRKELCNGNSDCMNSDDALSENNLKLPEIQRNDGCFQTGYNQEICLLKICSGLLEFRFYLEFVKNNLQDNKKDKARVIQSNTETLVHIFKQEIKDSYKIVLPTPTSNALLMEKLESQKEWLRTKTIQLILKALEEFLKVTMRSTRQT.

A signal peptide spans 1 to 24 (MKFLSARDFQPVAFLGLMLLTATA). A disulfide bridge links C70 with C76. The residue at position 79 (S79) is a Phosphoserine. C99 and C109 are oxidised to a cystine.

The protein belongs to the IL-6 superfamily. In terms of assembly, component of a hexamer of two molecules each of IL6, IL6R and IL6ST; first binds to IL6R to associate with the signaling subunit IL6ST. Interacts with IL6R (via the N-terminal ectodomain); this interaction may be affected by IL6R-binding with SORL1, hence decreasing IL6 cis signaling. Interacts with SORL1 (via the N-terminal ectodomain); this interaction leads to IL6 internalization and lysosomal degradation. May form a trimeric complex with the soluble SORL1 ectodomain and soluble IL6R receptor; this interaction might stabilize circulating IL6, hence promoting IL6 trans signaling.

It is found in the secreted. Functionally, cytokine with a wide variety of biological functions in immunity, tissue regeneration, and metabolism. Binds to IL6R, then the complex associates to the signaling subunit IL6ST/gp130 to trigger the intracellular IL6-signaling pathway. The interaction with the membrane-bound IL6R and IL6ST stimulates 'classic signaling', whereas the binding of IL6 and soluble IL6R to IL6ST stimulates 'trans-signaling'. Alternatively, 'cluster signaling' occurs when membrane-bound IL6:IL6R complexes on transmitter cells activate IL6ST receptors on neighboring receiver cells. IL6 is a potent inducer of the acute phase response. Rapid production of IL6 contributes to host defense during infection and tissue injury, but excessive IL6 synthesis is involved in disease pathology. In the innate immune response, is synthesized by myeloid cells, such as macrophages and dendritic cells, upon recognition of pathogens through toll-like receptors (TLRs) at the site of infection or tissue injury. In the adaptive immune response, is required for the differentiation of B-cells into immunoglolin-secreting cells. Plays a major role in the differentiation of CD4(+) T cell subsets. Essential factor for the development of T follicular helper (Tfh) cells that are required for the induction of germinal-center formation. Together with IL21, controls the early generation of Tfh cells and are critical for an effective antibody response to acute viral infection. Required to drive naive CD4(+) T cells to the Th17 lineage, through 'cluster signaling' by dendritic cells. Also required for proliferation of myeloma cells and the survival of plasmablast cells. In terms of biological role, acts as an essential factor in bone homeostasis and on vessels directly or indirectly by induction of VEGF, resulting in increased angiogenesis activity and vascular permeability. Induces, through 'trans-signaling' and synergistically with IL1B and TNF, the production of VEGF. Involved in metabolic controls, is discharged into the bloodstream after muscle contraction increasing lipolysis and improving insulin resistance. 'Trans-signaling' in central nervous system regulates energy and glucose homeostasis. Mediates, through GLP-1, crosstalk between insulin-sensitive tissues, intestinal L cells and pancreatic islets to adapt to changes in insulin demand. Also acts as a myokine. Plays a protective role during liver injury, being required for maintenance of tissue regeneration. Also has a pivotal role in iron metabolism by regulating HAMP/hepcidin expression upon inflammation or bacterial infection. Through activation of IL6ST-YAP-NOTCH pathway, induces inflammation-induced epithelial regeneration. The sequence is that of Interleukin-6 from Rattus norvegicus (Rat).